The sequence spans 902 residues: Mitochondrial aspartate-glutamate transporter AGC1 (902 aa).

Solcar repeat units follow at residues 528 to 614 (FDSL…MRNR), 622 to 710 (LSLF…LKKD), and 725 to 813 (LKTW…FKGF). The next 6 helical transmembrane spans lie at 534 to 554 (FSLG…IDFI), 591 to 611 (GPQL…NDFM), 622 to 642 (LSLF…VIFT), 681 to 702 (GLYN…IYFP), 731 to 751 (LTAG…FDVI), and 786 to 806 (FKGG…TLAA).

Belongs to the mitochondrial carrier (TC 2.A.29) family.

It localises to the mitochondrion inner membrane. Functionally, calcium-dependent mitochondrial aspartate and glutamate carrier. Transport of glutamate in mitochondria is required for mitochondrial transamination reactions and ornithine synthesis. Plays also a role in malate-aspartate NADH shuttle, which is critical for growth on acetate and fatty acids. This Saccharomyces cerevisiae (strain ATCC 204508 / S288c) (Baker's yeast) protein is Mitochondrial aspartate-glutamate transporter AGC1 (AGC1).